A 225-amino-acid polypeptide reads, in one-letter code: UPF0758 protein NGK_1225 (225 aa).

The 123-residue stretch at 102–224 (TLSDPDTVAD…VRSFRQLGLM (123 aa)) folds into the MPN domain. 3 residues coordinate Zn(2+): His173, His175, and Asp186. The short motif at 173 to 186 (HNHPGGSPEPSQED) is the JAMM motif element.

This sequence belongs to the UPF0758 family.

This is UPF0758 protein NGK_1225 from Neisseria gonorrhoeae (strain NCCP11945).